The following is a 495-amino-acid chain: Mesoderm induction early response protein 1 (495 aa).

2 disordered regions span residues 1-25 and 76-131; these read MAEPSLRTASPGGSAASDDHEFEPS and GSTV…PSFT. Residues 83 to 94 are compositionally biased toward acidic residues; sequence GEEEEDEEDMDN. Positions 120-130 are enriched in polar residues; the sequence is QSSNDDPTPSF. Residues 171-269 enclose the ELM2 domain; the sequence is KEIMVGSMFQ…EALRRLRFNV (99 aa). The 53-residue stretch at 274-326 folds into the SANT domain; sequence EELSVWTEEECRNFEQGLKAYGKDFHLIQANKVRTRSVGECVAFYYMWKKSER. Disordered regions lie at residues 356-397 and 416-495; these read DESE…NGVS and HLNG…HGEV. Composition is skewed to polar residues over residues 387 to 397 and 420 to 440; these read TASNNTQNGVS and PTISSSDPSSNETDTNGYNRE. Residues 462-476 show a composition bias toward basic and acidic residues; that stretch reads TNERPIKRQRMDSPG. Residues 477–489 are compositionally biased toward polar residues; it reads KESTGSSEFSQEV.

The protein localises to the nucleus. Its function is as follows. Transcriptional repressor regulating the expression of a number of genes. Probably functions through recruitment of histone deacetylases involved in chromatin silencing. This Xenopus laevis (African clawed frog) protein is Mesoderm induction early response protein 1 (mier1).